We begin with the raw amino-acid sequence, 190 residues long: Nucleoside triphosphate pyrophosphatase (190 aa).

D69 (proton acceptor) is an active-site residue.

This sequence belongs to the Maf family. A divalent metal cation serves as cofactor.

Its subcellular location is the cytoplasm. The catalysed reaction is a ribonucleoside 5'-triphosphate + H2O = a ribonucleoside 5'-phosphate + diphosphate + H(+). The enzyme catalyses a 2'-deoxyribonucleoside 5'-triphosphate + H2O = a 2'-deoxyribonucleoside 5'-phosphate + diphosphate + H(+). In terms of biological role, nucleoside triphosphate pyrophosphatase. May have a dual role in cell division arrest and in preventing the incorporation of modified nucleotides into cellular nucleic acids. This chain is Nucleoside triphosphate pyrophosphatase, found in Helicobacter pylori (strain P12).